Here is a 177-residue protein sequence, read N- to C-terminus: Large ribosomal subunit protein uL22 (177 aa).

Positions 118–177 (VESRPSREGRRGGAGESAGGARARRAQGSKAAAAKKAPASSSTKAATTTEASEEAKGGSQ) are disordered. Residues 121-130 (RPSREGRRGG) are compositionally biased toward basic and acidic residues. Residues 145–167 (GSKAAAAKKAPASSSTKAATTTE) are compositionally biased toward low complexity.

This sequence belongs to the universal ribosomal protein uL22 family. Part of the 50S ribosomal subunit.

This protein binds specifically to 23S rRNA; its binding is stimulated by other ribosomal proteins, e.g. L4, L17, and L20. It is important during the early stages of 50S assembly. It makes multiple contacts with different domains of the 23S rRNA in the assembled 50S subunit and ribosome. In terms of biological role, the globular domain of the protein is located near the polypeptide exit tunnel on the outside of the subunit, while an extended beta-hairpin is found that lines the wall of the exit tunnel in the center of the 70S ribosome. This is Large ribosomal subunit protein uL22 from Mycobacterium sp. (strain JLS).